The primary structure comprises 616 residues: Adenylosuccinate synthetase 2 (616 aa).

Residues 1–26 (MDKQAERDQSAGPVKTPQETQPPAHN) form a disordered region. A compositionally biased stretch (polar residues) spans 17–26 (PQETQPPAHN). Residues 87 to 93 (GDEGKGK) and 117 to 119 (GHT) each bind GTP. The active-site Proton acceptor is aspartate 88. Residues aspartate 88 and glycine 117 each contribute to the Mg(2+) site. Residues 88-91 (DEGK), 115-118 (NAGH), threonine 202, lysine 216, glutamine 328, threonine 343, and lysine 472 contribute to the IMP site. The active-site Proton donor is the histidine 118. 468 to 474 (AVTKKPR) is a substrate binding site. GTP-binding positions include arginine 474 and 603-605 (GNG).

Belongs to the adenylosuccinate synthetase family. In terms of assembly, homodimer. The cofactor is Mg(2+).

The protein localises to the cytoplasm. It catalyses the reaction IMP + L-aspartate + GTP = N(6)-(1,2-dicarboxyethyl)-AMP + GDP + phosphate + 2 H(+). It participates in purine metabolism; AMP biosynthesis via de novo pathway; AMP from IMP: step 1/2. Its function is as follows. Plays an important role in the salvage pathway for purine nucleotide biosynthesis. Catalyzes the first committed step in the biosynthesis of AMP from IMP. The chain is Adenylosuccinate synthetase 2 from Trypanosoma cruzi (strain CL Brener).